A 60-amino-acid chain; its full sequence is Large ribosomal subunit protein uL30 (60 aa).

The protein belongs to the universal ribosomal protein uL30 family. In terms of assembly, part of the 50S ribosomal subunit.

This chain is Large ribosomal subunit protein uL30, found in Salinispora arenicola (strain CNS-205).